The primary structure comprises 85 residues: Putative membrane protein insertion efficiency factor (85 aa).

The protein belongs to the UPF0161 family.

It is found in the cell inner membrane. Its function is as follows. Could be involved in insertion of integral membrane proteins into the membrane. The chain is Putative membrane protein insertion efficiency factor from Dictyoglomus thermophilum (strain ATCC 35947 / DSM 3960 / H-6-12).